Consider the following 351-residue polypeptide: L-threonine 3-dehydrogenase (351 aa).

Residue Cys-39 coordinates Zn(2+). Residues Thr-41 and His-44 each act as charge relay system in the active site. Zn(2+)-binding residues include His-64, Glu-65, Cys-94, Cys-97, Cys-100, and Cys-108. NAD(+) contacts are provided by residues Ile-176, Asp-196, Arg-201, 271–273, and 295–296; these read LGI and IY.

Belongs to the zinc-containing alcohol dehydrogenase family. Homotetramer. The cofactor is Zn(2+).

The protein localises to the cytoplasm. The catalysed reaction is L-threonine + NAD(+) = (2S)-2-amino-3-oxobutanoate + NADH + H(+). It functions in the pathway amino-acid degradation; L-threonine degradation via oxydo-reductase pathway; glycine from L-threonine: step 1/2. Catalyzes the NAD(+)-dependent oxidation of L-threonine to 2-amino-3-ketobutyrate. In Francisella tularensis subsp. holarctica (strain OSU18), this protein is L-threonine 3-dehydrogenase.